A 32-amino-acid chain; its full sequence is Photosystem II reaction center protein T (32 aa).

Residues 3–23 (ALVYTFLLIGTLVVIFFAIFF) form a helical membrane-spanning segment.

It belongs to the PsbT family. PSII is composed of 1 copy each of membrane proteins PsbA, PsbB, PsbC, PsbD, PsbE, PsbF, PsbH, PsbI, PsbJ, PsbK, PsbL, PsbM, PsbT, PsbX, PsbY, PsbZ, Psb30/Ycf12, at least 3 peripheral proteins of the oxygen-evolving complex and a large number of cofactors. It forms dimeric complexes.

It localises to the plastid. It is found in the chloroplast thylakoid membrane. Functionally, found at the monomer-monomer interface of the photosystem II (PS II) dimer, plays a role in assembly and dimerization of PSII. PSII is a light-driven water plastoquinone oxidoreductase, using light energy to abstract electrons from H(2)O, generating a proton gradient subsequently used for ATP formation. The chain is Photosystem II reaction center protein T from Emiliania huxleyi (Coccolithophore).